The following is a 64-amino-acid chain: Putative calcium channel toxin Tx758 (64 aa).

A signal peptide spans 1–18 (MSTFVIVFLLLTAVLCHA). Positions 19 to 27 (EPALDETAR) are excised as a propeptide. Intrachain disulfides connect cysteine 29–cysteine 43, cysteine 36–cysteine 49, and cysteine 42–cysteine 58.

This sequence belongs to the scorpion calcin-like family. As to expression, expressed by the venom gland.

Its subcellular location is the secreted. Its function is as follows. May increase intracellular calcium release through the activation of nuclear inositol 1,4,5-trisphosphate receptors (ITPR) of cardiomyocytes, thereby causing an increase in the contraction frequency of these cells. The sequence is that of Putative calcium channel toxin Tx758 from Buthus israelis (Israeli scorpion).